The chain runs to 418 residues: Alpha-1-antitrypsin (418 aa).

The N-terminal stretch at 1-24 (MPSSVSWGILLLAGLCCLVPVSLA) is a signal peptide. A Phosphoserine modification is found at Ser38. Asn70, Asn107, and Asn271 each carry an N-linked (GlcNAc...) asparagine glycan. The segment at 373–392 (GAMFLEAIPMSIPPEVKFNK) is RCL. A Phosphoserine modification is found at Ser383.

It belongs to the serpin family. As to quaternary structure, interacts with CELA2A. Interacts with ERGIC3 and LMAN1/ERGIC53. Interacts with PRSS1/Trypsin. As to expression, plasma.

It localises to the secreted. In terms of biological role, inhibitor of serine proteases. Its primary target is elastase, but it also has a moderate affinity for plasmin and thrombin. Inhibits trypsin, chymotrypsin and plasminogen activator. This is Alpha-1-antitrypsin (SERPINA1) from Pongo abelii (Sumatran orangutan).